Reading from the N-terminus, the 101-residue chain is Urease subunit beta (101 aa).

The protein belongs to the urease beta subunit family. Heterotrimer of UreA (gamma), UreB (beta) and UreC (alpha) subunits. Three heterotrimers associate to form the active enzyme.

The protein resides in the cytoplasm. The enzyme catalyses urea + 2 H2O + H(+) = hydrogencarbonate + 2 NH4(+). It functions in the pathway nitrogen metabolism; urea degradation; CO(2) and NH(3) from urea (urease route): step 1/1. The protein is Urease subunit beta of Rhizobium leguminosarum bv. trifolii (strain WSM2304).